Reading from the N-terminus, the 86-residue chain is MHLSTALFSAIALLAATQVIGASVEVPRDVAAIQIATSPYYACNCPNNCKHKKGSGCKYHSGPSDKSKVISGKCEWQGGQLNCIAT.

The N-terminal stretch at 1–21 (MHLSTALFSAIALLAATQVIG) is a signal peptide. 3 disulfide bridges follow: cysteine 43/cysteine 57, cysteine 45/cysteine 74, and cysteine 49/cysteine 83. The segment at 44–54 (NCPNNCKHKKG) is lipid-binding. The short motif at 72–83 (GKCEWQGGQLNC) is the Gamma-core element.

The protein localises to the secreted. In terms of biological role, cysteine-rich antifungal protein highly effective against yeasts such as clinically relevant Candida species, including the multidrug-resistant pathogen Candida auris. Does not cause metabolic inactivity and apoptosis induction, but the fungal cell-killing activity is connected to its pore-forming ability in the cell membrane. NFAP2 has a low potential to trigger resistance in C.albicans in vitro, and the developed tolerance to NFAP2 is not associated with severe phenotypic changes compared with development of resistance to generic fluconazole. This chain is Antifungal protein 2, found in Neosartorya fischeri (strain ATCC 1020 / DSM 3700 / CBS 544.65 / FGSC A1164 / JCM 1740 / NRRL 181 / WB 181) (Aspergillus fischerianus).